The chain runs to 460 residues: Phosphoglucomutase (460 aa).

The Phosphoserine intermediate role is filled by Ser-103. Ser-103 is a binding site for Mg(2+). Substrate-binding positions include 103 to 104 (SH) and Lys-113. Positions 239, 241, and 243 each coordinate Mg(2+). Residues 243-244 (DR), Thr-303, and 322-324 (EMS) each bind substrate.

The protein belongs to the phosphohexose mutase family. Requires Mg(2+) as cofactor.

It localises to the cytoplasm. It carries out the reaction alpha-D-glucose 1-phosphate = alpha-D-glucose 6-phosphate. This enzyme participates in both the breakdown and synthesis of glucose. The protein is Phosphoglucomutase (pgm) of Neisseria meningitidis serogroup B (strain ATCC BAA-335 / MC58).